Here is a 123-residue protein sequence, read N- to C-terminus: DPRFNPKYPTIYDYGYGTPAGTLGINCMHELYPYVEGVTINRQKHYDEQEAIRNGEIQQMQRYYERQVRKWKQRKLAAERIGNTNLEAKCSSAIRRYQSKIRKIVSENDFLTRQYDREKIANI.

It belongs to the Lactobacillus delbrueckii bacteriophages ORF1 protein family.

Its subcellular location is the virion. The protein is Structural protein of Lactococcus phage mv4 (Lactococcus delbrueckii bacteriophage mv4).